Reading from the N-terminus, the 315-residue chain is Ribose-phosphate pyrophosphokinase (315 aa).

Residues 37 to 39 (DGE) and 96 to 97 (RQ) contribute to the ATP site. Mg(2+) contacts are provided by histidine 131 and aspartate 171. Residue lysine 195 is part of the active site. D-ribose 5-phosphate contacts are provided by residues arginine 197, aspartate 221, and 225–229 (DTGGT).

It belongs to the ribose-phosphate pyrophosphokinase family. Class I subfamily. As to quaternary structure, homohexamer. Requires Mg(2+) as cofactor.

It localises to the cytoplasm. It carries out the reaction D-ribose 5-phosphate + ATP = 5-phospho-alpha-D-ribose 1-diphosphate + AMP + H(+). Its pathway is metabolic intermediate biosynthesis; 5-phospho-alpha-D-ribose 1-diphosphate biosynthesis; 5-phospho-alpha-D-ribose 1-diphosphate from D-ribose 5-phosphate (route I): step 1/1. Its function is as follows. Involved in the biosynthesis of the central metabolite phospho-alpha-D-ribosyl-1-pyrophosphate (PRPP) via the transfer of pyrophosphoryl group from ATP to 1-hydroxyl of ribose-5-phosphate (Rib-5-P). The polypeptide is Ribose-phosphate pyrophosphokinase (Haemophilus influenzae (strain ATCC 51907 / DSM 11121 / KW20 / Rd)).